The chain runs to 530 residues: T-complex protein 1 subunit zeta (530 aa).

Gly38 is an ADP binding site. Gly38 contacts ATP. Asp89 is a Mg(2+) binding site. The ADP site is built by Gly90, Thr91, Thr92, Ser93, Thr157, Lys158, and Ala410. Residues Gly90, Thr91, and Thr92 each coordinate ATP. ATP contacts are provided by Ala410, Gly411, Asp495, and Lys500. Asp495 is an ADP binding site.

In terms of assembly, component of the chaperonin-containing T-complex (TRiC), a hexadecamer composed of two identical back-to-back stacked rings enclosing a protein folding chamber. Each ring is made up of eight different subunits: TCP1/CCT1, CCT2, CCT3, CCT4, CCT5, CCT6A/CCT6, CCT7, CCT8. Interacts with PACRG.

The protein resides in the cytoplasm. The catalysed reaction is ATP + H2O = ADP + phosphate + H(+). In terms of biological role, component of the chaperonin-containing T-complex (TRiC), a molecular chaperone complex that assists the folding of actin, tubulin and other proteins upon ATP hydrolysis. The protein is T-complex protein 1 subunit zeta of Gallus gallus (Chicken).